The sequence spans 226 residues: 1-hydroxy-2-glutathionyl-2-methyl-3-butene dehydrogenase (226 aa).

Belongs to the short-chain dehydrogenases/reductases (SDR) family.

It carries out the reaction 2-glutathionyl-2-methylbut-3-en-1-ol + 2 NAD(+) + H2O = 2-glutathionyl-2-methylbut-3-enoate + 2 NADH + 3 H(+). It catalyses the reaction 2-glutathionyl-2-methylbut-3-en-1-ol + NAD(+) = 2-glutathionyl-2-methylbut-3-enal + NADH + H(+). The enzyme catalyses 2-glutathionyl-2-methylbut-3-enal + NAD(+) + H2O = 2-glutathionyl-2-methylbut-3-enoate + NADH + 2 H(+). Functionally, involved in isoprene degradation. Catalyzes the two-step NAD(+)-dependent oxidation of 2-glutathionyl-2-methylbut-3-en-1-ol (HGMB) to 2-glutathionyl-2-methylbut-3-enoate (GMBA). This is 1-hydroxy-2-glutathionyl-2-methyl-3-butene dehydrogenase from Rhodococcus sp. (strain AD45).